The primary structure comprises 190 residues: uncharacterized protein (190 aa).

The first 15 residues, 1–15, serve as a signal peptide directing secretion; sequence MKVFAYIALATVVAG.

It is found in the secreted. This is an uncharacterized protein from Arthroderma benhamiae (strain ATCC MYA-4681 / CBS 112371) (Trichophyton mentagrophytes).